Here is a 260-residue protein sequence, read N- to C-terminus: Ubiquinone/menaquinone biosynthesis C-methyltransferase UbiE (260 aa).

S-adenosyl-L-methionine contacts are provided by residues Thr-83, Asp-104, 132 to 133 (NA), and Ser-149.

This sequence belongs to the class I-like SAM-binding methyltransferase superfamily. MenG/UbiE family.

The catalysed reaction is a 2-demethylmenaquinol + S-adenosyl-L-methionine = a menaquinol + S-adenosyl-L-homocysteine + H(+). The enzyme catalyses a 2-methoxy-6-(all-trans-polyprenyl)benzene-1,4-diol + S-adenosyl-L-methionine = a 5-methoxy-2-methyl-3-(all-trans-polyprenyl)benzene-1,4-diol + S-adenosyl-L-homocysteine + H(+). The protein operates within quinol/quinone metabolism; menaquinone biosynthesis; menaquinol from 1,4-dihydroxy-2-naphthoate: step 2/2. It participates in cofactor biosynthesis; ubiquinone biosynthesis. In terms of biological role, methyltransferase required for the conversion of demethylmenaquinol (DMKH2) to menaquinol (MKH2) and the conversion of 2-polyprenyl-6-methoxy-1,4-benzoquinol (DDMQH2) to 2-polyprenyl-3-methyl-6-methoxy-1,4-benzoquinol (DMQH2). In Vibrio cholerae serotype O1 (strain ATCC 39315 / El Tor Inaba N16961), this protein is Ubiquinone/menaquinone biosynthesis C-methyltransferase UbiE.